The primary structure comprises 632 residues: tRNA uridine 5-carboxymethylaminomethyl modification enzyme MnmG (632 aa).

FAD is bound by residues 15 to 20 (GAGHAG), I127, and S182. Residue 276-290 (GPRYCPSIEDKIVRF) participates in NAD(+) binding. Q373 serves as a coordination point for FAD.

This sequence belongs to the MnmG family. In terms of assembly, homodimer. Heterotetramer of two MnmE and two MnmG subunits. FAD is required as a cofactor.

The protein localises to the cytoplasm. In terms of biological role, NAD-binding protein involved in the addition of a carboxymethylaminomethyl (cmnm) group at the wobble position (U34) of certain tRNAs, forming tRNA-cmnm(5)s(2)U34. The protein is tRNA uridine 5-carboxymethylaminomethyl modification enzyme MnmG of Streptococcus pyogenes serotype M18 (strain MGAS8232).